Reading from the N-terminus, the 200-residue chain is HTH-type transcriptional repressor KstR2 (200 aa).

In terms of domain architecture, HTH tetR-type spans Asn-9–Leu-69. A DNA-binding region (H-T-H motif) is located at residues Thr-32–Phe-51.

Homodimer.

In terms of biological role, controls the expression of a small regulon that may play a role in the utilization of cholesterol. The chain is HTH-type transcriptional repressor KstR2 (kstR2) from Mycobacterium tuberculosis (strain CDC 1551 / Oshkosh).